A 49-amino-acid polypeptide reads, in one-letter code: U6-myrmicitoxin-Mri1a (49 aa).

The signal sequence occupies residues 1–27 (MNPKALCSFLLATFLLLTVTIMPSVHA). A propeptide spanning residues 28-35 (NAEANADA) is cleaved from the precursor.

Contains 1 disulfide bond. In terms of tissue distribution, expressed by the venom gland.

Its subcellular location is the secreted. In Manica rubida (European giant red ant), this protein is U6-myrmicitoxin-Mri1a.